The chain runs to 816 residues: uncharacterized protein (816 aa).

Disordered stretches follow at residues 1-81 (MDVV…NSNN) and 391-411 (LGSN…NNDF). Positions 28 to 44 (EVPPQRPRQQNRWKPWW) are enriched in low complexity. Residues 64-81 (QGRSSPTTDFQDSVNSNN) show a composition bias toward polar residues. A phosphoserine mark is found at Ser-76 and Ser-79. Residues 391-400 (LGSNSSTNEN) show a composition bias toward low complexity.

This is an uncharacterized protein from Saccharomyces cerevisiae (strain ATCC 204508 / S288c) (Baker's yeast).